A 241-amino-acid polypeptide reads, in one-letter code: 2-C-methyl-D-erythritol 4-phosphate cytidylyltransferase (241 aa).

This sequence belongs to the IspD/TarI cytidylyltransferase family. IspD subfamily.

The enzyme catalyses 2-C-methyl-D-erythritol 4-phosphate + CTP + H(+) = 4-CDP-2-C-methyl-D-erythritol + diphosphate. The protein operates within isoprenoid biosynthesis; isopentenyl diphosphate biosynthesis via DXP pathway; isopentenyl diphosphate from 1-deoxy-D-xylulose 5-phosphate: step 2/6. Its function is as follows. Catalyzes the formation of 4-diphosphocytidyl-2-C-methyl-D-erythritol from CTP and 2-C-methyl-D-erythritol 4-phosphate (MEP). This is 2-C-methyl-D-erythritol 4-phosphate cytidylyltransferase from Hahella chejuensis (strain KCTC 2396).